A 248-amino-acid chain; its full sequence is MSSRKFFVGGNWKMNGDKKSLTELINTLNSGKISADTEVVCGAPTIYLDFARQKLDAKFAVSAQNCYKVAKGAFTGEISPAMIKDCGATWVILGHSERRHVFGESDELIGQKVAHALSENVGVIGCIGEKLDQREAGITEKVVFEQTKAIADNVKDWSKVVLAYEPVWAIGTGKTATPEQAQEVHKKLREWLKTNVSEDVAKSVRIIYGGSVTGGTCKELGAQPDIDGFLVGGASLKPEFIDIINAKQ.

Residues N11 and K13 each coordinate substrate. The active-site Electrophile is H95. The active-site Proton acceptor is E165.

It belongs to the triosephosphate isomerase family. In terms of assembly, homodimer.

The protein localises to the cytoplasm. The catalysed reaction is dihydroxyacetone phosphate = methylglyoxal + phosphate. The enzyme catalyses D-glyceraldehyde 3-phosphate = dihydroxyacetone phosphate. The protein operates within carbohydrate degradation; glycolysis; D-glyceraldehyde 3-phosphate from glycerone phosphate: step 1/1. Its pathway is carbohydrate biosynthesis; gluconeogenesis. In terms of biological role, triosephosphate isomerase is an extremely efficient metabolic enzyme that catalyzes the interconversion between dihydroxyacetone phosphate (DHAP) and D-glyceraldehyde-3-phosphate (G3P) in glycolysis and gluconeogenesis. Its function is as follows. It is also responsible for the non-negligible production of methylglyoxal a reactive cytotoxic side-product that modifies and can alter proteins, DNA and lipids. The polypeptide is Triosephosphate isomerase (tpi1) (Xenopus tropicalis (Western clawed frog)).